A 217-amino-acid chain; its full sequence is Urease accessory protein UreG (217 aa).

Residue 13–20 participates in GTP binding; the sequence is GPVGSGKT.

The protein belongs to the SIMIBI class G3E GTPase family. UreG subfamily. As to quaternary structure, homodimer. UreD, UreF and UreG form a complex that acts as a GTP-hydrolysis-dependent molecular chaperone, activating the urease apoprotein by helping to assemble the nickel containing metallocenter of UreC. The UreE protein probably delivers the nickel.

The protein resides in the cytoplasm. Its function is as follows. Facilitates the functional incorporation of the urease nickel metallocenter. This process requires GTP hydrolysis, probably effectuated by UreG. This is Urease accessory protein UreG from Frankia alni (strain DSM 45986 / CECT 9034 / ACN14a).